Consider the following 318-residue polypeptide: Lymphatic vessel endothelial hyaluronic acid receptor 1 (318 aa).

Residues methionine 1 to glycine 23 form the signal peptide. Topologically, residues alanine 24–threonine 234 are extracellular. Positions glycine 39–asparagine 129 constitute a Link domain. A glycan (N-linked (GlcNAc...) asparagine) is linked at asparagine 52. 2 disulfides stabilise this stretch: cysteine 60–cysteine 127 and cysteine 84–cysteine 105. N-linked (GlcNAc...) asparagine glycosylation is present at asparagine 129. A helical membrane pass occupies residues alanine 235–valine 255. Over lysine 256 to valine 318 the chain is Cytoplasmic. Residues alanine 284–serine 305 are compositionally biased toward basic and acidic residues. The tract at residues alanine 284 to valine 318 is disordered.

As to quaternary structure, homodimer; disulfide-linked. Interacts with PDGFB and IGFBP3. Forms a transient ternary complex with PDGFB and PDGFRB in TGN. O-glycosylated.

It localises to the membrane. In terms of biological role, ligand-specific transporter trafficking between intracellular organelles (TGN) and the plasma membrane. Plays a role in autocrine regulation of cell growth mediated by growth regulators containing cell surface retention sequence binding (CRS). May act as a hyaluronan (HA) transporter, either mediating its uptake for catabolism within lymphatic endothelial cells themselves, or its transport into the lumen of afferent lymphatic vessels for subsequent re-uptake and degradation in lymph nodes. Binds to pericelluar hyaluronan matrices deposited on the surface of leukocytes and facilitates cell adhesion and migration through lymphatic endothelium. The polypeptide is Lymphatic vessel endothelial hyaluronic acid receptor 1 (Lyve1) (Mus musculus (Mouse)).